Here is a 357-residue protein sequence, read N- to C-terminus: Arginine kinase Scy p 2.0101 (357 aa).

A Phosphagen kinase N-terminal domain is found at 9–91 (KLEEGFKKLE…FDPIIEDYHK (83 aa)). 64 to 68 (GVGVY) provides a ligand contact to L-arginine. IgE-binding and beta-hexosaminidase release from rat basophilic leukemia (RBL) cells stretches follow at residues 113–127 (VDPD…RVRC) and 127–155 (CGRS…VSST). One can recognise a Phosphagen kinase C-terminal domain in the interval 119–356 (FVISTRVRCG…LELIKIEKEM (238 aa)). Residue 122–126 (STRVR) coordinates ATP. Position 185 (His-185) interacts with ATP. A disulfide bond links Cys-201 and Cys-271. The segment at 204–218 (WPTGRGIYHNDNKTF) is igE-binding and beta-hexosaminidase release from rat basophilic leukemia (RBL) cells. An igE-binding, but no beta-hexosaminidase release from rat basophilic leukemia (RBL) cells region spans residues 211–225 (YHNDNKTFLVWCNEE). Residue Glu-225 participates in L-arginine binding. Arg-229 contributes to the ATP binding site. L-arginine is bound at residue Cys-271. ATP contacts are provided by residues 280–284 (RASVH) and 309–314 (RGTRGE). Residue Glu-314 participates in L-arginine binding. The segment at 316 to 330 (TEAEGGVYDISNKRR) is igE-binding, but no beta-hexosaminidase release from rat basophilic leukemia (RBL) cells.

It belongs to the ATP:guanido phosphotransferase family. Post-translationally, glycosylated. Muscle (at protein level).

It catalyses the reaction L-arginine + ATP = N(omega)-phospho-L-arginine + ADP + H(+). In terms of biological role, catalyzes the reversible transfer of high energy ATP gamma-phosphate group to L-arginine. The protein is Arginine kinase Scy p 2.0101 of Scylla paramamosain (Mud crab).